The following is a 102-amino-acid chain: Integration host factor subunit beta (102 aa).

This sequence belongs to the bacterial histone-like protein family. Heterodimer of an alpha and a beta chain.

Functionally, this protein is one of the two subunits of integration host factor, a specific DNA-binding protein that functions in genetic recombination as well as in transcriptional and translational control. The sequence is that of Integration host factor subunit beta from Rhodopseudomonas palustris (strain BisA53).